A 726-amino-acid polypeptide reads, in one-letter code: Elongation factor 2 (726 aa).

The 242-residue stretch at 19–260 (DRIRNIGICA…MVIKHLPSPP (242 aa)) folds into the tr-type G domain. Residues 28 to 35 (AHIDHGKT), 94 to 98 (DTPGH), and 148 to 151 (NKVD) contribute to the GTP site. At histidine 602 the chain carries Diphthamide.

It belongs to the TRAFAC class translation factor GTPase superfamily. Classic translation factor GTPase family. EF-G/EF-2 subfamily.

Its subcellular location is the cytoplasm. Functionally, catalyzes the GTP-dependent ribosomal translocation step during translation elongation. During this step, the ribosome changes from the pre-translocational (PRE) to the post-translocational (POST) state as the newly formed A-site-bound peptidyl-tRNA and P-site-bound deacylated tRNA move to the P and E sites, respectively. Catalyzes the coordinated movement of the two tRNA molecules, the mRNA and conformational changes in the ribosome. This Methanocaldococcus jannaschii (strain ATCC 43067 / DSM 2661 / JAL-1 / JCM 10045 / NBRC 100440) (Methanococcus jannaschii) protein is Elongation factor 2 (fusA).